The following is a 1450-amino-acid chain: ABC transporter G family member 37 (1450 aa).

An ABC transporter 1 domain is found at 158–431 (GNALHILPNK…FEFMGFRCPA (274 aa)). 191-198 (GPPGSGKT) provides a ligand contact to ATP. An ABC transmembrane type-2 1 domain is found at 509–721 (ELLKATIDRE…AQNAISTNEF (213 aa)). 6 helical membrane passes run 527-547 (FMYI…MTTF), 559-579 (GMIY…NGFA), 614-634 (IPIT…VIGF), 646-666 (LLLL…AGIG), 670-690 (VVSH…GGFI), and 756-776 (IGLG…TVAL). In terms of domain architecture, ABC transporter 2 spans 852 to 1104 (ISFNDVRYSV…KLIEYFEGID (253 aa)). Residue 897 to 904 (GVSGAGKT) coordinates ATP. The ABC transmembrane type-2 2 domain maps to 1177-1391 (TQCLACLWKQ…TLYGLVASQF (215 aa)). A run of 7 helical transmembrane segments spans residues 1198-1218 (AVRL…FWNL), 1236-1256 (YAAV…VVVV), 1284-1304 (LPYI…MIGF), 1311-1331 (FLWY…YGMM), 1341-1361 (IAAI…GYLI), 1372-1392 (WYCW…SQFG), and 1422-1442 (VVAV…SFAI).

It belongs to the ABC transporter superfamily. ABCG family. PDR (TC 3.A.1.205) subfamily.

The protein resides in the membrane. May be a general defense protein. The chain is ABC transporter G family member 37 from Oryza sativa subsp. japonica (Rice).